Reading from the N-terminus, the 883-residue chain is Phosphoenolpyruvate carboxylase (883 aa).

Catalysis depends on residues histidine 138 and lysine 546.

This sequence belongs to the PEPCase type 1 family. Mg(2+) serves as cofactor.

It carries out the reaction oxaloacetate + phosphate = phosphoenolpyruvate + hydrogencarbonate. In terms of biological role, forms oxaloacetate, a four-carbon dicarboxylic acid source for the tricarboxylic acid cycle. In Salmonella dublin (strain CT_02021853), this protein is Phosphoenolpyruvate carboxylase.